Reading from the N-terminus, the 588-residue chain is Arylsulfatase L (588 aa).

The first 31 residues, 1–31 (MLHLHHSWLCFRSWLAGMLSVLLGLVPSASS), serve as a signal peptide directing secretion. N-linked (GlcNAc...) asparagine glycosylation occurs at Asn32. Residues Asp46 and Asp47 each coordinate Ca(2+). N-linked (GlcNAc...) asparagine glycosylation is present at Asn58. Residue Cys86 participates in Ca(2+) binding. Residue Cys86 is the Nucleophile of the active site. A 3-oxoalanine (Cys) modification is found at Cys86. An N-linked (GlcNAc...) asparagine glycan is attached at Asn125. Lys145 serves as a coordination point for substrate. His147 is a catalytic residue. The N-linked (GlcNAc...) asparagine glycan is linked to Asn258. His301 is a binding site for substrate. Asn344 carries an N-linked (GlcNAc...) asparagine glycan. Residues Asp353 and His354 each coordinate Ca(2+). Residue Lys378 participates in substrate binding.

Belongs to the sulfatase family. The cofactor is Ca(2+). Post-translationally, the conversion to 3-oxoalanine (also known as C-formylglycine, FGly), of a serine or cysteine residue in prokaryotes and of a cysteine residue in eukaryotes, is critical for catalytic activity.

It localises to the golgi apparatus. The protein resides in the golgi stack. The catalysed reaction is an aryl sulfate + H2O = a phenol + sulfate + H(+). In terms of biological role, exhibits arylsulfatase activity towards the artificial substrate 4-methylumbelliferyl sulfate. May be essential for the correct composition of cartilage and bone matrix during development. Has no activity toward steroid sulfates. The chain is Arylsulfatase L (ARSL) from Macaca fascicularis (Crab-eating macaque).